Here is a 471-residue protein sequence, read N- to C-terminus: Glutamate--tRNA ligase (471 aa).

Positions Pro-9–Gly-19 match the 'HIGH' region motif. Cys-98, Cys-100, Cys-125, and His-127 together coordinate Zn(2+). The 'KMSKS' region motif lies at Lys-237–Arg-241. Position 240 (Lys-240) interacts with ATP.

Belongs to the class-I aminoacyl-tRNA synthetase family. Glutamate--tRNA ligase type 1 subfamily. As to quaternary structure, monomer. Requires Zn(2+) as cofactor.

The protein localises to the cytoplasm. It carries out the reaction tRNA(Glu) + L-glutamate + ATP = L-glutamyl-tRNA(Glu) + AMP + diphosphate. Functionally, catalyzes the attachment of glutamate to tRNA(Glu) in a two-step reaction: glutamate is first activated by ATP to form Glu-AMP and then transferred to the acceptor end of tRNA(Glu). In Escherichia coli O157:H7, this protein is Glutamate--tRNA ligase.